The primary structure comprises 292 residues: NADH-cytochrome b5 reductase 1 (292 aa).

Residues 12-32 (ALLVVGTAIFAVLVGAKFLGG) form a helical membrane-spanning segment. Residues 43-148 (TEFQNFVLKE…RGPKGAMVYT (106 aa)) form the FAD-binding FR-type domain. FAD contacts are provided by residues 128-143 (TTLK…GPKG) and 154-191 (HIGM…QVDL).

This sequence belongs to the flavoprotein pyridine nucleotide cytochrome reductase family. Monomer. Component of the 2-(3-amino-3-carboxypropyl)histidine synthase complex composed of dph1, dph2, dph3 and a NADH-dependent reductase, predominantly cbr1. FAD is required as a cofactor.

It localises to the mitochondrion outer membrane. The enzyme catalyses 2 Fe(III)-[cytochrome b5] + NADH = 2 Fe(II)-[cytochrome b5] + NAD(+) + H(+). The catalysed reaction is 2 Fe(3+)-[Dph3] + NADH = 2 Fe(2+)-[Dph3] + NAD(+) + H(+). Its pathway is protein modification; peptidyl-diphthamide biosynthesis. In terms of biological role, NADH-dependent reductase for dph3 and cytochrome b5. Required for the first step of diphthamide biosynthesis, a post-translational modification of histidine which occurs in elongation factor 2. Dph1 and dph2 transfer a 3-amino-3-carboxypropyl (ACP) group from S-adenosyl-L-methionine (SAM) to a histidine residue, the reaction is assisted by a reduction system comprising dph3 and a NADH-dependent reductase, predominantly cbr1. By reducing dph3, also involved in the formation of the tRNA wobble base modification mcm5s 2U (5-methoxycarbonylmethyl-2-thiouridine), mediated by the elongator complex. The cytochrome b5/NADH cytochrome b5 reductase electron transfer system supports the catalytic activity of several sterol biosynthetic enzymes. The chain is NADH-cytochrome b5 reductase 1 (cbr1) from Aspergillus oryzae (strain ATCC 42149 / RIB 40) (Yellow koji mold).